A 55-amino-acid chain; its full sequence is Protein CADMIUM TOLERANCE 2 (55 aa).

Residues 24–40 (GCLYACIFTALCCFCCY) form a helical membrane-spanning segment.

Belongs to the CYSTM1 family. Expressed only in roots.

The protein localises to the cell membrane. The protein resides in the secreted. It localises to the cell wall. Confers resistance to heavy metal ions (e.g. cadmium (CdCl(2)) and copper (CuCl(2))) by chelating them at the plasma membrane of root cells, thus stopping their entry and reducing their accumulation. This chain is Protein CADMIUM TOLERANCE 2, found in Oryza sativa subsp. japonica (Rice).